Consider the following 398-residue polypeptide: Chalcone synthase (398 aa).

Cys167 is an active-site residue.

The protein belongs to the thiolase-like superfamily. Chalcone/stilbene synthases family.

The enzyme catalyses (E)-4-coumaroyl-CoA + 3 malonyl-CoA + 3 H(+) = 2',4,4',6'-tetrahydroxychalcone + 3 CO2 + 4 CoA. Its pathway is secondary metabolite biosynthesis; flavonoid biosynthesis. The primary product of this enzyme is 4,2',4',6'-tetrahydroxychalcone (also termed naringenin-chalcone or chalcone) which can under specific conditions spontaneously isomerize into naringenin. This is Chalcone synthase (CHS) from Callistephus chinensis (China aster).